Reading from the N-terminus, the 668-residue chain is Auxilin-like clathrin uncoating factor SWA2 (668 aa).

The tract at residues 1-95 (MSDPFAHLLT…ANNTPPSALA (95 aa)) is disordered. The interval 1 to 100 (MSDPFAHLLT…PSALANTDDD (100 aa)) is CB1. Polar residues predominate over residues 17–36 (SASASKETTPQSSNSPSITG). Phosphoserine occurs at positions 52 and 64. Residues 76 to 92 (PTNSTTKSNTANNTPPS) show a composition bias toward low complexity. Residues 140-180 (DEVKDMEIARLMSLGLSIEEATEFYENDVTYERYLEILKSK) form the UBA domain. Positions 238-302 (EANDRLNNYS…FETKIDITKR (65 aa)) are CB2. Phosphoserine occurs at positions 264, 308, and 312. Disordered regions lie at residues 302–323 (RTAPDVSHSSSPTSGILIEENS) and 339–359 (EGNLTNSKSNEDSTLFNENSN). Residues 303-362 (TAPDVSHSSSPTSGILIEENSRRNEPLIEDSLLDFSEGNLTNSKSNEDSTLFNENSNTDS) form a CB3 region. The segment covering 340–359 (GNLTNSKSNEDSTLFNENSN) has biased composition (polar residues). 3 TPR repeats span residues 374 to 407 (YNEFKAKGTSLFKNGDYINSLQEYEKSLNTLPLN), 412 to 445 (IIALSNIIASQLKIGEYSKSIENSSMALELFPSS), and 467 to 500 (PKIMIRRAESFEHLESFKKALETYQELIKKNFFD). The interval 511-556 (QDFINPPPVKKSMPVKKKTTTTSPATKKQNLTASSSNSPISVDSTS) is disordered. A compositionally biased stretch (polar residues) spans 539–555 (QNLTASSSNSPISVDST). Residues 603-668 (CNWKDVSMQD…DKFKLQNDIN (66 aa)) form the J domain.

As to quaternary structure, interacts with the clathrin light and heavy chains CLC1 and CHC1, respectively. Binds to clathrin with its N-terminal domain containing 3 clathrin-binding (CB) motifs. Association with clathrin is transient. Binds to polyubiquitin and ubiquitinated proteins.

Its subcellular location is the cytoplasm. It is found in the endoplasmic reticulum membrane. Cofactor for the uncoating of clathrin-coated vesicles (CCVs) by Hsp70-type chaperones (SSA1/2/3 and SSB1/2). Coat disassembly is important for fusion of vesicles with target membranes and for recycling components of clathrin coats to the cytoplasm for further rounds of vesicle formation. Binds to assembled clathrin and recruits the ATP-activated chaperone to CCVs. Stimulates the ATPase activity of the clathrin-associated Hsp70-type chaperone SSA1, which then disrupts clathrin-clathrin interactions, leading to release of the clathrin coat. In addition, prevents unproductive clathrin assembly in the cell. Also required for cortical endoplasmic reticulum inheritance. The protein is Auxilin-like clathrin uncoating factor SWA2 (SWA2) of Saccharomyces cerevisiae (strain ATCC 204508 / S288c) (Baker's yeast).